Consider the following 197-residue polypeptide: Allatostatins (197 aa).

The signal sequence occupies residues 1-27; it reads MRSRTSVLTSSLAFLYFFGIVGRSALA. A propeptide spanning residues 28–56 is cleaved from the precursor; sequence MEETPASSMNLQHYNNMLNPMVFDDTMPE. Isoleucine 76 bears the Isoleucine amide mark. Residues 80–86 constitute a propeptide that is removed on maturation; it reads WIDTNDN. 4 positions are modified to leucine amide: leucine 96, leucine 106, leucine 154, and leucine 184. Residues 161-197 form a disordered region; it reads YSGGQPLGSKRPNDMLSQRYHFGLGKRMSEDEEESSQ. The propeptide occupies 188–197; it reads MSEDEEESSQ.

The protein belongs to the allatostatin family.

Its subcellular location is the secreted. Neuropeptides. The protein is Allatostatins of Apis mellifera (Honeybee).